A 300-amino-acid chain; its full sequence is MAAARPALPSSPTSLLLARSTSAPDLAARRPRRWLVAAAGVPAVAGALAASASTPAASMLLRDGGATLLVTAGAYSLVRAFDALTERRLVQQSLSRKVVHVLSGVFFMASWPLFSNSTSARFFAAVVPFLNCVRLLTYGLGFYSDEALVKSVTREGKREELLRGPLYYVIVLLIIVLVFWRDSPIGIVSLSMMSGGDGFADIVGRRFGSLKLPFNKKKSWVGSAAMFISGFLLSALMLSYFSWLGYIHVSWDQALGKLVLVALAATVVECIPVTDVVDDNISVPLATMLVAFLLFGNTAN.

The N-terminal 36 residues, Met1–Val36, are a transit peptide targeting the chloroplast. The next 7 membrane-spanning stretches (helical) occupy residues Leu60–Val78, Val98–Thr118, Phe122–Phe142, Tyr168–Val188, Phe227–Ile247, Ala254–Thr274, and Val276–Gly296.

This sequence belongs to the polyprenol kinase family.

It localises to the plastid. Its subcellular location is the chloroplast membrane. It carries out the reaction phytol + CTP = phytyl phosphate + CDP + H(+). It participates in cofactor biosynthesis; tocopherol biosynthesis. Functionally, involved in the activation and reutilization of phytol from chlorophyll degradation in plant metabolism, including tocopherol biosynthesis. Catalyzes the conversion of phytol to phytol monophosphate (PMP). This chain is Probable phytol kinase, chloroplastic, found in Triticum aestivum (Wheat).